The chain runs to 465 residues: MPKKAKPTGSGKEEGPAPCKQMKLEAAGGPSALNFDSPSSLFESLISPIKTETFFKEFWEQKPLLIQRDDPALATYYGSLFKLTDLKSLCSRGMYYGRDVNVCRCVNGKKKVLNKDGKAHFLQLRKDFDQKRATIQFHQPQRFKDELWRIQEKLECYFGSLVGSNVYITPAGSQGLPPHYDDVEVFILQLEGEKHWRLYHPTVPLAREYSVEAEERIGRPVHEFMLKPGDLLYFPRGTIHQADTPAGLAHSTHVTISTYQNNSWGDFLLDTISGLVFDTAKEDVELRTGIPRQLLLQVESTTVATRRLSGFLRTLADRLEGTKELLSSDMKKDFIMHRLPPYSAGDGAELSTPGGKLPRLDSVVRLQFKDHIVLTVLPDQDQSDEAQEKMVYIYHSLKNSRETHMMGNEEETEFHGLRFPLSHLDALKQIWNSPAISVKDLKLTTDEEKESLVLSLWTECLIQVV.

One can recognise a JmjC domain in the interval 139 to 271 (QPQRFKDELW…NSWGDFLLDT (133 aa)). Positions 179, 181, and 240 each coordinate Fe cation. S309 carries the post-translational modification Phosphoserine.

This sequence belongs to the ROX family. MINA53 subfamily. It depends on Fe(2+) as a cofactor. In terms of tissue distribution, expressed in liver, skeletal muscle, heart, pancreas, and placenta. Not detected in brain, lung or kidney. Expressed in several lung cancer tissues, but is barely detected in the adjacent non-cancerous tissues. Also highly expressed in several esophageal squamous cell carcinoma (ESCC), and colon cancer tissues, and in various cancer cell lines.

Its subcellular location is the nucleus. It localises to the nucleolus. It catalyses the reaction L-histidyl-[protein] + 2-oxoglutarate + O2 = (3S)-3-hydroxy-L-histidyl-[protein] + succinate + CO2. It carries out the reaction L-histidyl-[ribosomal protein uL15] + 2-oxoglutarate + O2 = (3S)-3-hydroxy-L-histidyl-[ribosomal protein uL15] + succinate + CO2. Functionally, oxygenase that can act as both a histone lysine demethylase and a ribosomal histidine hydroxylase. Is involved in the demethylation of trimethylated 'Lys-9' on histone H3 (H3K9me3), leading to an increase in ribosomal RNA expression. Also catalyzes the hydroxylation of 60S ribosomal protein L27a on 'His-39'. May play an important role in cell growth and survival. May be involved in ribosome biogenesis, most likely during the assembly process of pre-ribosomal particles. The protein is Ribosomal oxygenase 2 of Homo sapiens (Human).